A 317-amino-acid chain; its full sequence is MSMRATFLGTGGAVPTTARAPSAFLVNRDGERLLFDCGEGTQRQMMRYGTGFGVSHLFVTHLHGDHILGIPGLIQTLDFNDRDDSLAIHGPPGSKGHLEQLVHAGGYQPGFHVSVHEVRPGNVAYRADDYEVRAFDTEHRTASVGYALVEDDRPGRFDREKAEELGVPVGPAFGRLHAGEDVELEDGTVVRSEQVVGDPRPGRTVVYTGDTRPLNSTVEVACDADLLVHDATFTDEEAERAKQTAHSTAREAARVARDADVRRFALTHISARYAADPSPLLEQAREVYDGEAFVAEDGQKLEVPYADSDGGGAETGE.

Zn(2+) contacts are provided by H61, H63, D65, H66, H139, D210, and H268. D65 (proton acceptor) is an active-site residue.

This sequence belongs to the RNase Z family. Homodimer. Requires Zn(2+) as cofactor.

It catalyses the reaction Endonucleolytic cleavage of RNA, removing extra 3' nucleotides from tRNA precursor, generating 3' termini of tRNAs. A 3'-hydroxy group is left at the tRNA terminus and a 5'-phosphoryl group is left at the trailer molecule.. Its activity is regulated as follows. Inhibited by high salt concentrations. Functionally, zinc phosphodiesterase, which displays some tRNA 3'-processing endonuclease activity. Probably involved in tRNA maturation, by removing a 3'-trailer from precursor tRNA. Can also catalyze the 5' end cleavage of the 5S rRNA. This chain is Ribonuclease Z, found in Haloferax volcanii (strain ATCC 29605 / DSM 3757 / JCM 8879 / NBRC 14742 / NCIMB 2012 / VKM B-1768 / DS2) (Halobacterium volcanii).